The primary structure comprises 390 residues: Galactokinase (390 aa).

Position 33 to 36 (33 to 36) interacts with substrate; it reads EHTD. ATP-binding positions include Ser67 and 124-130; that span reads GSGLSSS. The Mg(2+) site is built by Ser130 and Glu162. Asp174 serves as the catalytic Proton acceptor. Tyr224 is a binding site for substrate.

It belongs to the GHMP kinase family. GalK subfamily.

The protein localises to the cytoplasm. It carries out the reaction alpha-D-galactose + ATP = alpha-D-galactose 1-phosphate + ADP + H(+). Its pathway is carbohydrate metabolism; galactose metabolism. Catalyzes the transfer of the gamma-phosphate of ATP to D-galactose to form alpha-D-galactose-1-phosphate (Gal-1-P). The sequence is that of Galactokinase from Streptococcus suis (strain 05ZYH33).